The primary structure comprises 276 residues: Pantothenate synthetase (276 aa).

27–34 (MGALHRGH) is a binding site for ATP. The active-site Proton donor is the histidine 34. Glutamine 58 provides a ligand contact to (R)-pantoate. Glutamine 58 serves as a coordination point for beta-alanine. 147 to 150 (GKKD) provides a ligand contact to ATP. Glutamine 153 is a (R)-pantoate binding site. Residues valine 176 and 184 to 187 (LSSR) each bind ATP.

This sequence belongs to the pantothenate synthetase family. Homodimer.

The protein resides in the cytoplasm. The enzyme catalyses (R)-pantoate + beta-alanine + ATP = (R)-pantothenate + AMP + diphosphate + H(+). Its pathway is cofactor biosynthesis; (R)-pantothenate biosynthesis; (R)-pantothenate from (R)-pantoate and beta-alanine: step 1/1. Functionally, catalyzes the condensation of pantoate with beta-alanine in an ATP-dependent reaction via a pantoyl-adenylate intermediate. The sequence is that of Pantothenate synthetase from Helicobacter pylori (strain G27).